Consider the following 593-residue polypeptide: Aspartate--tRNA ligase (593 aa).

Glu181 serves as a coordination point for L-aspartate. Positions 205–208 are aspartate; sequence QLYK. Position 227 (Arg227) interacts with L-aspartate. Residues 227–229 and Gln236 each bind ATP; that span reads RDE. His455 contributes to the L-aspartate binding site. Glu489 is a binding site for ATP. An L-aspartate-binding site is contributed by Arg496. 541 to 544 lines the ATP pocket; sequence GLDR.

This sequence belongs to the class-II aminoacyl-tRNA synthetase family. Type 1 subfamily. Homodimer.

The protein localises to the cytoplasm. It carries out the reaction tRNA(Asp) + L-aspartate + ATP = L-aspartyl-tRNA(Asp) + AMP + diphosphate. In terms of biological role, catalyzes the attachment of L-aspartate to tRNA(Asp) in a two-step reaction: L-aspartate is first activated by ATP to form Asp-AMP and then transferred to the acceptor end of tRNA(Asp). In Ruminiclostridium cellulolyticum (strain ATCC 35319 / DSM 5812 / JCM 6584 / H10) (Clostridium cellulolyticum), this protein is Aspartate--tRNA ligase.